We begin with the raw amino-acid sequence, 155 residues long: Transcriptional repressor NrdR (155 aa).

The segment at Cys3–Cys34 is a zinc-finger region. In terms of domain architecture, ATP-cone spans Pro49–Asp139.

This sequence belongs to the NrdR family. Zn(2+) is required as a cofactor.

Functionally, negatively regulates transcription of bacterial ribonucleotide reductase nrd genes and operons by binding to NrdR-boxes. The protein is Transcriptional repressor NrdR of Legionella pneumophila (strain Lens).